Reading from the N-terminus, the 556-residue chain is Urocanate hydratase (556 aa).

NAD(+) contacts are provided by residues 52–53 (GG), Q130, 176–178 (GMG), E196, R201, 242–243 (NA), 263–267 (QTSAH), 273–274 (YL), and Y322. The active site involves C410. G492 is a binding site for NAD(+).

The protein belongs to the urocanase family. NAD(+) serves as cofactor.

The protein localises to the cytoplasm. The catalysed reaction is 4-imidazolone-5-propanoate = trans-urocanate + H2O. It functions in the pathway amino-acid degradation; L-histidine degradation into L-glutamate; N-formimidoyl-L-glutamate from L-histidine: step 2/3. In terms of biological role, catalyzes the conversion of urocanate to 4-imidazolone-5-propionate. The polypeptide is Urocanate hydratase (Shewanella sp. (strain MR-7)).